Consider the following 517-residue polypeptide: E3 ubiquitin-protein ligase TRIM65 (517 aa).

Position 2 is an N-acetylalanine (A2). The RING-type zinc finger occupies 12–51; it reads CAICLGLYQDPVTLPCGHNFCGACIRDWWDRCGKACPECR. The tract at residues 75 to 94 is disordered; sequence AGPARDPGPDPGPGPDPAAR. The B box-type zinc-finger motif lies at 90-137; sequence DPAARCPRHGRPLELFCRTEGRCVCSVCTVRECRLHERALLDAERLKR. Zn(2+) is bound by residues C95, H98, C117, and H125. A coiled-coil region spans residues 139 to 227; that stretch reads AQLRASLEVT…QRLRVHLEAV (89 aa). Phosphoserine is present on S185. A (Microbial infection) Glycyl lysine isopeptide (Lys-Gly) (interchain with G-Cter in ubiquitin) cross-link involves residue K206. A B30.2/SPRY domain is found at 313 to 506; the sequence is APVPSTVCPL…LTLCHQPGAV (194 aa).

It belongs to the TRIM/RBCC family. As to quaternary structure, homo-multimerizes. Interacts with ARRDC4.

It localises to the cytoplasm. The catalysed reaction is S-ubiquitinyl-[E2 ubiquitin-conjugating enzyme]-L-cysteine + [acceptor protein]-L-lysine = [E2 ubiquitin-conjugating enzyme]-L-cysteine + N(6)-ubiquitinyl-[acceptor protein]-L-lysine.. It participates in protein modification; protein ubiquitination. Its function is as follows. E3 ubiquitin ligase that plays a role in several processes including innate immnity, autophagy or inflammation. Negatively regulates miRNAs by modulating the ubiquitination and stability of TNRC6A, a protein involved in RNA-mediated gene silencing by both micro-RNAs (miRNAs) and short interfering RNAs. This ubiquitination results in the suppressed expression of miR-138-5p leading to increased autophagy. Upon enteroviral infection, promotes 'Lys-63'-mediated ubiquitination activation of IFIH1/MDA5 leading to innate signaling cascade. Mechanistically, selectively recognizes MDA5 filaments that occur on dsRNAs. Plays also a role in limitation of inflammation through different mechanisms. First, promotes 'Lys-48'-mediated ubiquitination of VCAM1 leading to its degradation and limitation of LPS-induced lung inflammation. In addition, negatively regulates inflammasome activation by promoting 'lys48'-linked ubiquitination of NLRP3 which is critical for the inhibition of NLRP3 inflammasome activation in resting macrophages. In Homo sapiens (Human), this protein is E3 ubiquitin-protein ligase TRIM65 (TRIM65).